Consider the following 461-residue polypeptide: Asparagine--tRNA ligase (461 aa).

It belongs to the class-II aminoacyl-tRNA synthetase family. As to quaternary structure, homodimer.

It localises to the cytoplasm. The enzyme catalyses tRNA(Asn) + L-asparagine + ATP = L-asparaginyl-tRNA(Asn) + AMP + diphosphate + H(+). The sequence is that of Asparagine--tRNA ligase from Geobacter sulfurreducens (strain ATCC 51573 / DSM 12127 / PCA).